The following is a 265-amino-acid chain: Chalcone synthase (265 aa).

Cys-40 is an active-site residue.

The protein belongs to the thiolase-like superfamily. Chalcone/stilbene synthases family.

The enzyme catalyses (E)-4-coumaroyl-CoA + 3 malonyl-CoA + 3 H(+) = 2',4,4',6'-tetrahydroxychalcone + 3 CO2 + 4 CoA. It participates in secondary metabolite biosynthesis; flavonoid biosynthesis. In terms of biological role, the primary product of this enzyme is 4,2',4',6'-tetrahydroxychalcone (also termed naringenin-chalcone or chalcone) which can under specific conditions spontaneously isomerize into naringenin. This chain is Chalcone synthase (CHSII), found in Medicago sativa (Alfalfa).